We begin with the raw amino-acid sequence, 305 residues long: Coenzyme PQQ synthesis protein B (305 aa).

It belongs to the PqqB family.

Its pathway is cofactor biosynthesis; pyrroloquinoline quinone biosynthesis. In terms of biological role, may be involved in the transport of PQQ or its precursor to the periplasm. The polypeptide is Coenzyme PQQ synthesis protein B (Methylobacillus flagellatus).